Here is a 563-residue protein sequence, read N- to C-terminus: RUN and FYVE domain-containing protein 4 (563 aa).

An RUN domain is found at 33 to 166 (TETSAELHRL…VAFNLDLQRP (134 aa)). Disordered stretches follow at residues 176 to 327 (SESR…TTEG) and 375 to 397 (KKSSPTEKPQEWTGVTSGTMQED). Basic and acidic residues-rich tracts occupy residues 196-205 (GFPEEVRCSR) and 263-284 (ETEREGFQLDQKDGGPKPRKFL). The span at 285-295 (ENSTASIQQQR) shows a compositional bias: polar residues. Basic and acidic residues predominate over residues 297–312 (RAKDVKMQLTGRKVEG). Over residues 385 to 396 (EWTGVTSGTMQE) the composition is skewed to polar residues. A coiled-coil region spans residues 421–462 (QAQCQEQLRAQEAELQALQEQLSRCQKERALLQVKLEQKQQE). The segment at 428–558 (LRAQEAELQA…RCCPTCAQQE (131 aa)) adopts an FYVE-type zinc-finger fold. Cys513, Cys516, Cys529, Cys532, Cys537, Cys540, Cys551, and Cys554 together coordinate Zn(2+).

In terms of assembly, forms homodimers (via coiled coil domain). Forms a ternary complex with RAB7A and LAMP2; the interaction with RAB7A is mediated by RUFY4 (via RUN and coiled coil domains). Interacts with GTP-, but not GDP-bound ARL8A and ARL8B. Interacts with dynactin/DCTN1 and the dynein intermediate chain DYNC1I1/2. Expressed in dendritic cells.

The protein localises to the cytoplasmic vesicle. The protein resides in the autophagosome. Its subcellular location is the lysosome. ARL8 effector that promotes the coupling of endolysosomes to dynein-dynactin for retrograde transport along microtubules. Acts by binding both GTP-bound ARL8 and dynein-dynactin. In nonneuronal cells, promotes concentration of endolysosomes in the juxtanuclear area. In hippocampal neurons, drives retrograde transport of endolysosomes from the axon to the soma. Positive regulator of macroautophagy in dendritic cells. Increases autophagic flux, probably by stimulating both autophagosome formation and facilitating tethering with lysosomes. Binds to phosphatidylinositol 3-phosphate (PtdIns3P) through its FYVE-type zinc finger. Positive regulator of osteosclast bone-resorbing activity, possibly by promoting late endosome-lysosome fusion by acting as an adapter protein between RAB7A on late endosomes and LAMP2 on primary lysosomes. This chain is RUN and FYVE domain-containing protein 4 (Rufy4), found in Mus musculus (Mouse).